The primary structure comprises 1026 residues: mRNA transport homolog 4 (1026 aa).

Residues isoleucine 134 to valine 290 form the Helicase ATP-binding domain. Alanine 147–threonine 154 lines the ATP pocket. A DEIH box motif is present at residues aspartate 238–histidine 241. The Helicase C-terminal domain maps to asparagine 360–glutamate 564.

Belongs to the helicase family. SKI2 subfamily.

The protein localises to the nucleus. This chain is mRNA transport homolog 4 (mtr-4), found in Caenorhabditis elegans.